A 134-amino-acid polypeptide reads, in one-letter code: MATCRSRGVERGGAPHVLAVDDSSVDRAVISGILRSSQFRVTAVDSGKRALELLGSEPNVSMIITDYWMPEMTGYELLKKVKESSRLKEIPVVIMSSENVSTRINRCLEEGAEDFLLKPVQPSDVSRLCSRVLR.

The 118-residue stretch at 16 to 133 folds into the Response regulatory domain; it reads HVLAVDDSSV…DVSRLCSRVL (118 aa). Residue Asp66 is modified to 4-aspartylphosphate.

This sequence belongs to the ARR family. Type-A subfamily. In terms of processing, two-component system major event consists of a His-to-Asp phosphorelay between a sensor histidine kinase (HK) and a response regulator (RR). In plants, the His-to-Asp phosphorelay involves an additional intermediate named Histidine-containing phosphotransfer protein (HPt). This multistep phosphorelay consists of a His-Asp-His-Asp sequential transfer of a phosphate group between first a His and an Asp of the HK protein, followed by the transfer to a conserved His of the HPt protein and finally the transfer to an Asp in the receiver domain of the RR protein. In terms of tissue distribution, expressed in mature leaves and shoots, and at low levels in roots and flowers.

Its function is as follows. Functions as a response regulator involved in His-to-Asp phosphorelay signal transduction system. Phosphorylation of the Asp residue in the receiver domain activates the ability of the protein to promote the transcription of target genes. Type-A response regulators seem to act as negative regulators of the cytokinin signaling. This Oryza sativa subsp. indica (Rice) protein is Two-component response regulator ORR5.